The primary structure comprises 963 residues: Iron-responsive element-binding protein 2 (963 aa).

[4Fe-4S] cluster is bound by residues cysteine 512, cysteine 578, and cysteine 581.

This sequence belongs to the aconitase/IPM isomerase family. In terms of assembly, interacts with RBCK1 only in iron-rich conditions. Interacts (when associated with the 4Fe-4S) with FBXL5. Interacts with CIAO1 and CIAO2A. Requires [4Fe-4S] cluster as cofactor. In terms of processing, ubiquitinated and degraded by the proteasome in presence of high level of iron and oxygen. Ubiquitinated by a SCF complex containing FBXL5. Upon iron and oxygen depletion FBXL5 is degraded, preventing ubiquitination and allowing its RNA-binding activity.

It is found in the cytoplasm. RNA-binding protein that binds to iron-responsive elements (IRES), which are stem-loop structures found in the 5'-UTR of ferritin, and delta aminolevulinic acid synthase mRNAs, and in the 3'-UTR of transferrin receptor mRNA. Binding to the IRE element in ferritin results in the repression of its mRNA translation. Binding of the protein to the transferrin receptor mRNA inhibits the degradation of this otherwise rapidly degraded mRNA. The protein is Iron-responsive element-binding protein 2 (Ireb2) of Mus musculus (Mouse).